Here is a 622-residue protein sequence, read N- to C-terminus: DNA mismatch repair protein MutL (622 aa).

The protein belongs to the DNA mismatch repair MutL/HexB family.

Functionally, this protein is involved in the repair of mismatches in DNA. It is required for dam-dependent methyl-directed DNA mismatch repair. May act as a 'molecular matchmaker', a protein that promotes the formation of a stable complex between two or more DNA-binding proteins in an ATP-dependent manner without itself being part of a final effector complex. The protein is DNA mismatch repair protein MutL of Prosthecochloris aestuarii (strain DSM 271 / SK 413).